The chain runs to 322 residues: Helix-loop-helix 34 (322 aa).

Positions 1 to 11 are enriched in basic and acidic residues; that stretch reads METNLSEEKQK. Residues 1 to 23 form a disordered region; sequence METNLSEEKQKPSKSQAQQRRQM. One can recognise a bHLH domain in the interval 8–62; that stretch reads EKQKPSKSQAQQRRQMENYEFSQLANELPLARAISGQHIDKTTMVRLATAYIKLH. 2 consecutive PAS domains span residues 82 to 152 and 203 to 276; these read DSLW…DLNW and PTPV…FNLG.

Efficient DNA binding requires dimerization with another bHLH protein. Expressed in a small subset of neurons, probably AVJL and AVJR. Expressed in the AVH neurons.

It localises to the nucleus. Transcription factor. Involved in specifying AVH neuron identity, acting in concert with unc-42. Involved in serotonin-mediated feeding behavior, probably acting by modulating expression of genes involved in glutamate signaling. This is Helix-loop-helix 34 (hlh-34) from Caenorhabditis elegans.